The primary structure comprises 288 residues: Pyridoxal kinase PdxY (288 aa).

Residues Ser9 and 44–45 (TQ) contribute to the substrate site. Asp111, Glu148, and Lys181 together coordinate ATP. Position 224 (Asp224) interacts with substrate.

This sequence belongs to the pyridoxine kinase family. PdxY subfamily. As to quaternary structure, homodimer. Requires Mg(2+) as cofactor.

The catalysed reaction is pyridoxal + ATP = pyridoxal 5'-phosphate + ADP + H(+). It participates in cofactor metabolism; pyridoxal 5'-phosphate salvage; pyridoxal 5'-phosphate from pyridoxal: step 1/1. In terms of biological role, pyridoxal kinase involved in the salvage pathway of pyridoxal 5'-phosphate (PLP). Catalyzes the phosphorylation of pyridoxal to PLP. The sequence is that of Pyridoxal kinase PdxY from Haemophilus influenzae (strain PittEE).